We begin with the raw amino-acid sequence, 93 residues long: Large ribosomal subunit protein eL43 (93 aa).

Residues 39 to 60 (CEFCGKYGVKRKAVGIWGCKDC) form a C4-type zinc finger.

This sequence belongs to the eukaryotic ribosomal protein eL43 family.

This is Large ribosomal subunit protein eL43 (RPL37A) from Brassica rapa subsp. rapa (Turnip).